A 616-amino-acid chain; its full sequence is Electron transfer flavoprotein-ubiquinone oxidoreductase, mitochondrial (616 aa).

The N-terminal 32 residues, 1 to 32, are a transit peptide targeting the mitochondrion; sequence MLVRLTKLSCPAYHWFHALKIKKCLPLCAPRC. 70–84 contributes to the FAD binding site; it reads VVIVGAGPAGLSAAI. Residue Lys-95 is modified to N6-acetyllysine. An intramembrane segment occupies 108 to 129; it reads IGAHTLSGACLDPAAFKELFPD. N6-acetyllysine is present on residues Lys-131 and Lys-222. Residues Gly-304 and Gly-305 each contribute to the a ubiquinone site. 2 positions are modified to N6-acetyllysine: Lys-356 and Lys-415. An intramembrane segment occupies 427–446; the sequence is TGLHVTEYEDNLKQSWVWKE. Ser-550 carries the phosphoserine modification. 4 residues coordinate [4Fe-4S] cluster: Cys-560, Cys-585, Cys-588, and Cys-591. Residues 576-605 enclose the 4Fe-4S ferredoxin-type domain; that stretch reads FRLQINAQNCVHCKTCDIKDPSQNINWVVP.

Belongs to the ETF-QO/FixC family. In terms of assembly, monomer. [4Fe-4S] cluster is required as a cofactor. It depends on FAD as a cofactor. Acetylation of Lys-95 and Lys-222 is observed in liver mitochondria from fasted mice but not from fed mice.

It is found in the mitochondrion inner membrane. It carries out the reaction a ubiquinone + reduced [electron-transfer flavoprotein] = a ubiquinol + oxidized [electron-transfer flavoprotein] + H(+). Functionally, accepts electrons from ETF and reduces ubiquinone. In Mus musculus (Mouse), this protein is Electron transfer flavoprotein-ubiquinone oxidoreductase, mitochondrial (Etfdh).